A 140-amino-acid chain; its full sequence is HTH-type transcriptional regulator YfmP (140 aa).

The region spanning 1 to 73 (MEWMKIDQVA…LQELQHFMET (73 aa)) is the HTH merR-type domain. The segment at residues 6–25 (IDQVAKRSGLTKRTIRFYEE) is a DNA-binding region (H-T-H motif).

Functionally, repressor of the yfmOP operon. A mutation in yfmP leads to overexpression of yfmO, probably causing a decrease in cellular copper that is eventually responsible for a reduced copper induction of copZA. The protein is HTH-type transcriptional regulator YfmP (yfmP) of Bacillus subtilis (strain 168).